A 273-amino-acid polypeptide reads, in one-letter code: Putative pyruvate, phosphate dikinase regulatory protein (273 aa).

Residue 153 to 160 participates in ADP binding; sequence GISRTSKT.

It belongs to the pyruvate, phosphate/water dikinase regulatory protein family. PDRP subfamily.

The enzyme catalyses N(tele)-phospho-L-histidyl/L-threonyl-[pyruvate, phosphate dikinase] + ADP = N(tele)-phospho-L-histidyl/O-phospho-L-threonyl-[pyruvate, phosphate dikinase] + AMP + H(+). The catalysed reaction is N(tele)-phospho-L-histidyl/O-phospho-L-threonyl-[pyruvate, phosphate dikinase] + phosphate + H(+) = N(tele)-phospho-L-histidyl/L-threonyl-[pyruvate, phosphate dikinase] + diphosphate. In terms of biological role, bifunctional serine/threonine kinase and phosphorylase involved in the regulation of the pyruvate, phosphate dikinase (PPDK) by catalyzing its phosphorylation/dephosphorylation. The protein is Putative pyruvate, phosphate dikinase regulatory protein of Rhizobium johnstonii (strain DSM 114642 / LMG 32736 / 3841) (Rhizobium leguminosarum bv. viciae).